We begin with the raw amino-acid sequence, 373 residues long: MSNQDFYATLGVARAATDDEIKKAYRKLAMKYHPDRNPDNKEAEEKFKEVQKAYETLSDKEKRAMYDQYGHAAFEGGGQGGFGGFGGFGGAQGFDFGDIFSQMFGGGSGRAQPDYQGEDVQVGIEITLEEAAKGVKKRINIPTYEACDVCNGSGAKPGASPETCPTCKGSGTVHIQQAIFRMQQTCPTCRGAGKHIKEPCVKCRGVGRNKAVKTVEVNIPAGIDDGQRIRLSGEGGPGMHGAPAGDLYVTVRIRAHKIFQRDGLDLHCELPISFAMAALGGELEVPTLDGKVKLTVPKETQTGRRMRVKGKGVKSLRSSATGDLYCHIVVETPVNLTDRQKELLEEFERISTGLENQTPRKKSFLDKLRDLFD.

One can recognise a J domain in the interval 5–70 (DFYATLGVAR…EKRAMYDQYG (66 aa)). A CR-type zinc finger spans residues 134–212 (GVKKRINIPT…CRGVGRNKAV (79 aa)). The Zn(2+) site is built by cysteine 147, cysteine 150, cysteine 164, cysteine 167, cysteine 186, cysteine 189, cysteine 200, and cysteine 203. 4 CXXCXGXG motif repeats span residues 147–154 (CDVCNGSG), 164–171 (CPTCKGSG), 186–193 (CPTCRGAG), and 200–207 (CVKCRGVG).

This sequence belongs to the DnaJ family. As to quaternary structure, homodimer. It depends on Zn(2+) as a cofactor.

Its subcellular location is the cytoplasm. In terms of biological role, participates actively in the response to hyperosmotic and heat shock by preventing the aggregation of stress-denatured proteins and by disaggregating proteins, also in an autonomous, DnaK-independent fashion. Unfolded proteins bind initially to DnaJ; upon interaction with the DnaJ-bound protein, DnaK hydrolyzes its bound ATP, resulting in the formation of a stable complex. GrpE releases ADP from DnaK; ATP binding to DnaK triggers the release of the substrate protein, thus completing the reaction cycle. Several rounds of ATP-dependent interactions between DnaJ, DnaK and GrpE are required for fully efficient folding. Also involved, together with DnaK and GrpE, in the DNA replication of plasmids through activation of initiation proteins. The protein is Chaperone protein DnaJ of Neisseria gonorrhoeae (strain ATCC 700825 / FA 1090).